We begin with the raw amino-acid sequence, 490 residues long: Betaine aldehyde dehydrogenase (490 aa).

S26, I27, and D93 together coordinate K(+). 150–152 (GAW) provides a ligand contact to NAD(+). The Charge relay system role is filled by K162. 176–179 (KPSE) is a binding site for NAD(+). V180 contacts K(+). 230 to 233 (GTDT) serves as a coordination point for NAD(+). K(+) is bound at residue L246. Catalysis depends on E252, which acts as the Proton acceptor. Residues G254, C286, and E387 each contribute to the NAD(+) site. C286 functions as the Nucleophile in the catalytic mechanism. C286 bears the Cysteine sulfenic acid (-SOH) mark. Residues K457 and G460 each contribute to the K(+) site. The active-site Charge relay system is the E464.

This sequence belongs to the aldehyde dehydrogenase family. In terms of assembly, dimer of dimers. Requires K(+) as cofactor.

It carries out the reaction betaine aldehyde + NAD(+) + H2O = glycine betaine + NADH + 2 H(+). It participates in amine and polyamine biosynthesis; betaine biosynthesis via choline pathway; betaine from betaine aldehyde: step 1/1. Functionally, involved in the biosynthesis of the osmoprotectant glycine betaine. Catalyzes the irreversible oxidation of betaine aldehyde to the corresponding acid. This Pseudomonas syringae pv. tomato (strain ATCC BAA-871 / DC3000) protein is Betaine aldehyde dehydrogenase.